The chain runs to 104 residues: Large ribosomal subunit protein bL21 (104 aa).

Belongs to the bacterial ribosomal protein bL21 family. In terms of assembly, part of the 50S ribosomal subunit. Contacts protein L20.

Functionally, this protein binds to 23S rRNA in the presence of protein L20. In Streptococcus agalactiae serotype Ia (strain ATCC 27591 / A909 / CDC SS700), this protein is Large ribosomal subunit protein bL21.